A 251-amino-acid chain; its full sequence is 3-deoxy-manno-octulosonate cytidylyltransferase (251 aa).

Belongs to the KdsB family.

The protein localises to the cytoplasm. It catalyses the reaction 3-deoxy-alpha-D-manno-oct-2-ulosonate + CTP = CMP-3-deoxy-beta-D-manno-octulosonate + diphosphate. The protein operates within nucleotide-sugar biosynthesis; CMP-3-deoxy-D-manno-octulosonate biosynthesis; CMP-3-deoxy-D-manno-octulosonate from 3-deoxy-D-manno-octulosonate and CTP: step 1/1. It functions in the pathway bacterial outer membrane biogenesis; lipopolysaccharide biosynthesis. In terms of biological role, activates KDO (a required 8-carbon sugar) for incorporation into bacterial lipopolysaccharide in Gram-negative bacteria. The sequence is that of 3-deoxy-manno-octulosonate cytidylyltransferase from Rhizobium leguminosarum bv. trifolii (strain WSM2304).